A 180-amino-acid polypeptide reads, in one-letter code: ATP synthase subunit delta (180 aa).

This sequence belongs to the ATPase delta chain family. In terms of assembly, F-type ATPases have 2 components, F(1) - the catalytic core - and F(0) - the membrane proton channel. F(1) has five subunits: alpha(3), beta(3), gamma(1), delta(1), epsilon(1). F(0) has three main subunits: a(1), b(2) and c(10-14). The alpha and beta chains form an alternating ring which encloses part of the gamma chain. F(1) is attached to F(0) by a central stalk formed by the gamma and epsilon chains, while a peripheral stalk is formed by the delta and b chains.

The protein resides in the cell membrane. Its function is as follows. F(1)F(0) ATP synthase produces ATP from ADP in the presence of a proton or sodium gradient. F-type ATPases consist of two structural domains, F(1) containing the extramembraneous catalytic core and F(0) containing the membrane proton channel, linked together by a central stalk and a peripheral stalk. During catalysis, ATP synthesis in the catalytic domain of F(1) is coupled via a rotary mechanism of the central stalk subunits to proton translocation. Functionally, this protein is part of the stalk that links CF(0) to CF(1). It either transmits conformational changes from CF(0) to CF(1) or is implicated in proton conduction. The polypeptide is ATP synthase subunit delta (Caldicellulosiruptor bescii (strain ATCC BAA-1888 / DSM 6725 / KCTC 15123 / Z-1320) (Anaerocellum thermophilum)).